The chain runs to 379 residues: Glucose-1-phosphate adenylyltransferase (379 aa).

Alpha-D-glucose 1-phosphate contacts are provided by residues Gly164, 179 to 180 (EK), and Ser190.

Belongs to the bacterial/plant glucose-1-phosphate adenylyltransferase family. Homotetramer.

It carries out the reaction alpha-D-glucose 1-phosphate + ATP + H(+) = ADP-alpha-D-glucose + diphosphate. The protein operates within glycan biosynthesis; glycogen biosynthesis. Involved in the biosynthesis of ADP-glucose, a building block required for the elongation reactions to produce glycogen. Catalyzes the reaction between ATP and alpha-D-glucose 1-phosphate (G1P) to produce pyrophosphate and ADP-Glc. This chain is Glucose-1-phosphate adenylyltransferase, found in Streptococcus agalactiae serotype III (strain NEM316).